The chain runs to 297 residues: Non-homologous end-joining factor 1 (297 aa).

Positions 1-131 (MDARLLQLPW…ATVSTVCRHL (131 aa)) are globular head. The C-terminal tail stretch occupies residues 220-286 (PKAPTHPKEE…LTHRPPAGAS (67 aa)). A disordered region spans residues 222-297 (APTHPKEEDT…PKKKAKGLFM (76 aa)). Positions 232 to 255 (GNSASHRPMAESSSISFEKTVPTQ) are enriched in polar residues. The span at 263-286 (VSEPSQVPQSSVSCLTHRPPAGAS) shows a compositional bias: low complexity. The XLM signature appears at 287 to 297 (KPKKKAKGLFM). The span at 287–297 (KPKKKAKGLFM) shows a compositional bias: basic residues.

The protein belongs to the XRCC4-XLF family. XLF subfamily. As to quaternary structure, homodimer. Interacts with xrcc4; the interaction is direct and is mediated via a head-to-head interaction between N-terminal head regions. Component of the core long-range non-homologous end joining (NHEJ) complex (also named DNA-PK complex) composed of prkdc/DNA-PKcs, lig4, xrcc4, xrcc6/Ku70, xrcc5/Ku80 and nhej1/xlf.

It is found in the nucleus. Its function is as follows. DNA repair protein involved in DNA non-homologous end joining (NHEJ); required for double-strand break (DSB) repair and V(D)J recombination. It is also involved in telomere maintenance. Plays a key role in NHEJ by promoting the ligation of various mismatched and non-cohesive ends. In some studies, has been shown to associate with xrcc4 to form alternating helical filaments that bridge DNA and act like a bandage, holding together the broken DNA until it is repaired. Alternatively, it has also been shown that rather than forming filaments, a single nhej1 dimer interacts through both head domains with xrcc4 to promote the close alignment of DNA ends. The xrcc4-nhej1/xlf subcomplex binds to the DNA fragments of a DSB in a highly diffusive manner and robustly bridges two independent DNA molecules, holding the broken DNA fragments in close proximity to one other. The mobility of the bridges ensures that the ends remain accessible for further processing by other repair factors. In Xenopus laevis (African clawed frog), this protein is Non-homologous end-joining factor 1.